The chain runs to 177 residues: Anti-apoptotic protein NR13 (177 aa).

The BH1 motif lies at 75–94; the sequence is LEAEGGLNWGRLLALVVFTG. The chain crosses the membrane as a helical span at residues 86 to 106; it reads LLALVVFTGTLAAALAESGCE. A BH2 motif is present at residues 126 to 141; sequence EWLEEHGGWDGFCRFF. A helical membrane pass occupies residues 156 to 176; sequence SNAIMAAAGFGIAGLAFLLVV.

This sequence belongs to the Bcl-2 family. As to quaternary structure, interacts with BAX. In terms of tissue distribution, expressed preferentially in heart, skeletal muscle, retina, optical tectum and bursa of Fabricius.

It is found in the cell membrane. Shows anti-apoptotic properties. Counteract the pro-apoptotic activity of BAX. The chain is Anti-apoptotic protein NR13 (NR13) from Gallus gallus (Chicken).